Reading from the N-terminus, the 648-residue chain is NADP-dependent malic enzyme, chloroplastic (648 aa).

The N-terminal 61 residues, 1 to 61 (MISLNSSFLE…VDSAVRDVNA (61 aa)), are a transit peptide targeting the chloroplast. The active-site Proton donor is the Tyr-195. Arg-248 serves as a coordination point for NAD(+). Lys-266 serves as the catalytic Proton acceptor. A divalent metal cation contacts are provided by Glu-339, Asp-340, and Asp-363. Asp-363 contributes to the NAD(+) binding site. 392–408 (LFLGAGEAGTGIAELIA) contributes to the NADP(+) binding site. Asn-504 provides a ligand contact to NAD(+).

Belongs to the malic enzymes family. In terms of assembly, homotetramer. Mg(2+) is required as a cofactor. The cofactor is Mn(2+).

It is found in the plastid. The protein resides in the chloroplast. It carries out the reaction (S)-malate + NADP(+) = pyruvate + CO2 + NADPH. The catalysed reaction is oxaloacetate + H(+) = pyruvate + CO2. It participates in photosynthesis; C4 acid pathway. In terms of biological role, the chloroplastic ME isoform decarboxylates malate shuttled from neighboring mesophyll cells. The CO(2) released is then refixed by ribulose-bisphosphate carboxylase. This pathway eliminates the photorespiratory loss of CO(2) that occurs in most plants. This chain is NADP-dependent malic enzyme, chloroplastic (MOD1), found in Flaveria trinervia (Clustered yellowtops).